The sequence spans 527 residues: Peptide chain release factor 3 (527 aa).

The 269-residue stretch at A9–L277 folds into the tr-type G domain. GTP-binding positions include S18–T25, D86–H90, and N140–D143.

This sequence belongs to the TRAFAC class translation factor GTPase superfamily. Classic translation factor GTPase family. PrfC subfamily.

Its subcellular location is the cytoplasm. Increases the formation of ribosomal termination complexes and stimulates activities of RF-1 and RF-2. It binds guanine nucleotides and has strong preference for UGA stop codons. It may interact directly with the ribosome. The stimulation of RF-1 and RF-2 is significantly reduced by GTP and GDP, but not by GMP. This is Peptide chain release factor 3 from Pseudomonas paraeruginosa (strain DSM 24068 / PA7) (Pseudomonas aeruginosa (strain PA7)).